Consider the following 512-residue polypeptide: Kynurenine 3-monooxygenase (512 aa).

It belongs to the aromatic-ring hydroxylase family. KMO subfamily. Requires FAD as cofactor.

It is found in the mitochondrion outer membrane. It carries out the reaction L-kynurenine + NADPH + O2 + H(+) = 3-hydroxy-L-kynurenine + NADP(+) + H2O. It participates in cofactor biosynthesis; NAD(+) biosynthesis; quinolinate from L-kynurenine: step 1/3. Its function is as follows. Catalyzes the hydroxylation of L-kynurenine (L-Kyn) to form 3-hydroxy-L-kynurenine (L-3OHKyn). Required for synthesis of quinolinic acid. In Aspergillus fumigatus (strain ATCC MYA-4609 / CBS 101355 / FGSC A1100 / Af293) (Neosartorya fumigata), this protein is Kynurenine 3-monooxygenase (bna4).